A 559-amino-acid polypeptide reads, in one-letter code: Oxygen-dependent choline dehydrogenase (559 aa).

4–33 (DYIIIGAGSAGNVLAARLTEESDVSVLLLE) lines the FAD pocket. Positions 182–202 (EGFGPMDRTVTPKGRRASTAR) are disordered. The active-site Proton acceptor is the His-471.

This sequence belongs to the GMC oxidoreductase family. FAD serves as cofactor.

The catalysed reaction is choline + A = betaine aldehyde + AH2. The enzyme catalyses betaine aldehyde + NAD(+) + H2O = glycine betaine + NADH + 2 H(+). It participates in amine and polyamine biosynthesis; betaine biosynthesis via choline pathway; betaine aldehyde from choline (cytochrome c reductase route): step 1/1. Its function is as follows. Involved in the biosynthesis of the osmoprotectant glycine betaine. Catalyzes the oxidation of choline to betaine aldehyde and betaine aldehyde to glycine betaine at the same rate. The sequence is that of Oxygen-dependent choline dehydrogenase from Pectobacterium atrosepticum (strain SCRI 1043 / ATCC BAA-672) (Erwinia carotovora subsp. atroseptica).